A 367-amino-acid chain; its full sequence is DNA replication and repair protein RecF (367 aa).

30–37 serves as a coordination point for ATP; that stretch reads GANGSGKT.

The protein belongs to the RecF family.

The protein localises to the cytoplasm. In terms of biological role, the RecF protein is involved in DNA metabolism; it is required for DNA replication and normal SOS inducibility. RecF binds preferentially to single-stranded, linear DNA. It also seems to bind ATP. This chain is DNA replication and repair protein RecF, found in Pseudomonas fluorescens (strain SBW25).